The sequence spans 402 residues: Cysteine desulfurase NifS (402 aa).

Residues G72–T73, N151, Q179, and C199–H201 contribute to the pyridoxal 5'-phosphate site. N6-(pyridoxal phosphate)lysine is present on K202. Position 237 (T237) interacts with pyridoxal 5'-phosphate. The Cysteine persulfide intermediate role is filled by C325. C325 is a [2Fe-2S] cluster binding site.

The protein belongs to the class-V pyridoxal-phosphate-dependent aminotransferase family. NifS/IscS subfamily. Homodimer. It depends on pyridoxal 5'-phosphate as a cofactor.

It catalyses the reaction (sulfur carrier)-H + L-cysteine = (sulfur carrier)-SH + L-alanine. Its activity is regulated as follows. Inhibited by equimolar concentrations of p-chloromercuribenzoic acid, iodoacetamide or N-ethylmaleimide. Functionally, catalyzes the removal of elemental sulfur atoms from cysteine to produce alanine. Seems to participate in the biosynthesis of the nitrogenase metalloclusters by providing the inorganic sulfur required for the Fe-S core formation. This Azotobacter vinelandii protein is Cysteine desulfurase NifS.